Consider the following 141-residue polypeptide: Hemoglobin subunit alpha (141 aa).

The 141-residue stretch at Val-1–Arg-141 folds into the Globin domain. Ser-3 carries the phosphoserine modification. Lys-7 and Lys-11 each carry N6-succinyllysine. Lys-16 carries the post-translational modification N6-acetyllysine; alternate. An N6-succinyllysine; alternate modification is found at Lys-16. Phosphotyrosine is present on Tyr-24. Phosphoserine is present on Ser-35. Position 40 is an N6-succinyllysine (Lys-40). Ser-49 carries the phosphoserine modification. Position 58 (His-58) interacts with O2. Position 87 (His-87) interacts with heme b. Phosphoserine is present on Ser-102. Thr-108 is modified (phosphothreonine). Ser-124 is modified (phosphoserine). A Phosphothreonine modification is found at Thr-134. Residue Ser-138 is modified to Phosphoserine.

Belongs to the globin family. Heterotetramer of two alpha chains and two beta chains. Red blood cells.

In terms of biological role, involved in oxygen transport from the lung to the various peripheral tissues. Functionally, hemopressin acts as an antagonist peptide of the cannabinoid receptor CNR1. Hemopressin-binding efficiently blocks cannabinoid receptor CNR1 and subsequent signaling. In Chalinolobus morio (Chocolate-wattled bat), this protein is Hemoglobin subunit alpha (HBA).